Consider the following 1711-residue polypeptide: Reverse gyrase (1711 aa).

The segment at 1–39 (MKAVYREMCPNCWGRISDERLVMRNPCEECLDEPVHADS) adopts an RG N-terminal-type zinc-finger fold. Positions 9, 12, 27, and 30 each coordinate Zn(2+). Residues glutamine 89 and 106-113 (APTGMGKS) each bind ATP. The Helicase ATP-binding domain maps to 93–256 (VKRLLKGRSF…RLKKQMSRYL (164 aa)). Residues 213-216 (DDVD) carry the DEAD box motif. Positions 638–1711 (DLVRSALMIV…YSEIQRYVSG (1074 aa)) are topoisomerase I. Residues 642–805 (SALMIVESPN…NIKRIEFHEV (164 aa)) form the Toprim domain. Glutamate 648 is a Mg(2+) binding site. The RG C-terminal-type zinc finger occupies 722 to 751 (LKRCRDCGHQFVDWEKKGVCPRCGSTNVRD). 4 residues coordinate Zn(2+): cysteine 725, cysteine 728, cysteine 741, and cysteine 744. Aspartate 774 serves as a coordination point for Mg(2+). Positions 821–1709 (NENRVNAQIV…ELYSEIQRYV (889 aa)) constitute a Topo IA-type catalytic domain. Residues 1160–1287 (VFGLVLGDGT…LSVYLYQIGI (128 aa)) form the DOD-type homing endonuclease domain. Tyrosine 1452 (O-(5'-phospho-DNA)-tyrosine intermediate) is an active-site residue.

It in the N-terminal section; belongs to the DEAD box helicase family. DDVD subfamily. In the C-terminal section; belongs to the type IA topoisomerase family. Monomer. It depends on Zn(2+) as a cofactor. Mg(2+) is required as a cofactor. This protein undergoes a protein self splicing that involves a post-translational excision of the intervening region (intein) followed by peptide ligation.

The protein resides in the cytoplasm. It catalyses the reaction ATP + H2O = ADP + phosphate + H(+). In terms of biological role, modifies the topological state of DNA by introducing positive supercoils in an ATP-dependent process, increasing the linking number in steps of +1. Binds to single-stranded DNA, transiently cleaves and then rejoins the ends, introducing a positive supercoil in the process. The scissile phosphodiester is attacked by the catalytic tyrosine of the enzyme, resulting in the formation of a DNA-(5'-phosphotyrosyl)-enzyme intermediate. Probably involved in rewinding DNA strands in regions of the chromosome that have opened up to allow replication, transcription, DNA repair and/or for DNA protection. The sequence is that of Reverse gyrase from Thermococcus kodakarensis (strain ATCC BAA-918 / JCM 12380 / KOD1) (Pyrococcus kodakaraensis (strain KOD1)).